A 569-amino-acid polypeptide reads, in one-letter code: Proline--tRNA ligase (569 aa).

This sequence belongs to the class-II aminoacyl-tRNA synthetase family. ProS type 1 subfamily. As to quaternary structure, homodimer.

It localises to the cytoplasm. It catalyses the reaction tRNA(Pro) + L-proline + ATP = L-prolyl-tRNA(Pro) + AMP + diphosphate. Its function is as follows. Catalyzes the attachment of proline to tRNA(Pro) in a two-step reaction: proline is first activated by ATP to form Pro-AMP and then transferred to the acceptor end of tRNA(Pro). As ProRS can inadvertently accommodate and process non-cognate amino acids such as alanine and cysteine, to avoid such errors it has two additional distinct editing activities against alanine. One activity is designated as 'pretransfer' editing and involves the tRNA(Pro)-independent hydrolysis of activated Ala-AMP. The other activity is designated 'posttransfer' editing and involves deacylation of mischarged Ala-tRNA(Pro). The misacylated Cys-tRNA(Pro) is not edited by ProRS. The sequence is that of Proline--tRNA ligase from Shewanella loihica (strain ATCC BAA-1088 / PV-4).